A 717-amino-acid chain; its full sequence is UvrABC system protein C (717 aa).

A GIY-YIG domain is found at 16 to 95; it reads DSPGVYKFRD…IKEFDPRFNV (80 aa). The UVR domain maps to 208 to 243; the sequence is GTYIRRLEKDMMQAAEEMEYERAARLRDDAEALKRA. Residues 467-548 are disordered; it reads ERTGEWEEAP…PREDDGRPKR (82 aa). The span at 477–522 shows a compositional bias: low complexity; the sequence is EAAPGSASVHASATGPAATGQATAGPAAMGQAAAGPVSTGPAATGP.

It belongs to the UvrC family. As to quaternary structure, interacts with UvrB in an incision complex.

Its subcellular location is the cytoplasm. Functionally, the UvrABC repair system catalyzes the recognition and processing of DNA lesions. UvrC both incises the 5' and 3' sides of the lesion. The N-terminal half is responsible for the 3' incision and the C-terminal half is responsible for the 5' incision. This Streptomyces griseus subsp. griseus (strain JCM 4626 / CBS 651.72 / NBRC 13350 / KCC S-0626 / ISP 5235) protein is UvrABC system protein C.